The chain runs to 326 residues: Probable cell division protein WhiA (326 aa).

A DNA-binding region (H-T-H motif) is located at residues 275–308 (SLDELGRLADPVMTKDAIAGRIRRLLAMADKRAL).

The protein belongs to the WhiA family.

Its function is as follows. Involved in cell division and chromosome segregation. The sequence is that of Probable cell division protein WhiA from Pseudarthrobacter chlorophenolicus (strain ATCC 700700 / DSM 12829 / CIP 107037 / JCM 12360 / KCTC 9906 / NCIMB 13794 / A6) (Arthrobacter chlorophenolicus).